We begin with the raw amino-acid sequence, 373 residues long: PqqA peptide cyclase (373 aa).

Residues 7-227 enclose the Radical SAM core domain; the sequence is ILNPVGLLAE…EVYAGVIVID (221 aa). Residues Cys21, Cys25, and Cys28 each contribute to the [4Fe-4S] cluster site.

The protein belongs to the radical SAM superfamily. PqqE family. Interacts with PqqD. The interaction is necessary for activity of PqqE. [4Fe-4S] cluster is required as a cofactor.

The catalysed reaction is [PQQ precursor protein] + S-adenosyl-L-methionine = E-Y cross-linked-[PQQ precursor protein] + 5'-deoxyadenosine + L-methionine + H(+). Its pathway is cofactor biosynthesis; pyrroloquinoline quinone biosynthesis. Functionally, catalyzes the cross-linking of a glutamate residue and a tyrosine residue in the PqqA protein as part of the biosynthesis of pyrroloquinoline quinone (PQQ). This Methylocella silvestris (strain DSM 15510 / CIP 108128 / LMG 27833 / NCIMB 13906 / BL2) protein is PqqA peptide cyclase.